The sequence spans 95 residues: PIK3R3 upstream open reading frame protein (95 aa).

Positions 1–27 (MGPSRLVRGPRPQGMRSPYRRPGMGWP) are disordered.

This chain is PIK3R3 upstream open reading frame protein, found in Homo sapiens (Human).